The sequence spans 907 residues: Probable disease resistance protein At1g58390 (907 aa).

The region spanning 144–456 (QGDRQREMRQ…AEGISTAEDY (313 aa)) is the NB-ARC domain. 190 to 197 (GMGGLGKT) provides a ligand contact to ATP. LRR repeat units follow at residues 608–631 (LIHL…LGNL) and 843–868 (MPLL…RFIY).

The protein belongs to the disease resistance NB-LRR family.

Functionally, possible disease resistance protein. This Arabidopsis thaliana (Mouse-ear cress) protein is Probable disease resistance protein At1g58390.